Here is a 394-residue protein sequence, read N- to C-terminus: Phosphoglycerate kinase (394 aa).

Substrate-binding positions include aspartate 21 to asparagine 23, arginine 36, histidine 59 to arginine 62, arginine 118, and arginine 151. Serine 183 is subject to Phosphoserine. ATP-binding residues include lysine 201 and glycine 292. Threonine 299 carries the post-translational modification Phosphothreonine. ATP contacts are provided by residues glutamate 323 and glycine 350–serine 353.

It belongs to the phosphoglycerate kinase family. Monomer.

The protein localises to the cytoplasm. It carries out the reaction (2R)-3-phosphoglycerate + ATP = (2R)-3-phospho-glyceroyl phosphate + ADP. It participates in carbohydrate degradation; glycolysis; pyruvate from D-glyceraldehyde 3-phosphate: step 2/5. In Bacillus cereus (strain B4264), this protein is Phosphoglycerate kinase.